The chain runs to 381 residues: Acetyl-CoA:oxalate CoA-transferase (381 aa).

Histidine 233 is a catalytic residue.

This sequence belongs to the CoA-transferase III family. In terms of assembly, homodimer.

The enzyme catalyses oxalate + acetyl-CoA = oxalyl-CoA + acetate. Its function is as follows. Involved in the catabolism of oxalate and in the adapatation to low pH. ACOCT serves to prime the oxalate-induced acid tolerance response (ATR) cycle by producing substrate for oxalyl-CoA decarboxylase (OXC) and formyl-coenzyme A transferase (FCOCT). Catalyzes the reversible conversion of acetyl-CoA and oxalate to oxalyl-CoA and acetate. It can also use formyl-CoA and oxalate to produce oxalyl-CoA and formate with significantly reduced specific activity. This Escherichia coli (strain K12) protein is Acetyl-CoA:oxalate CoA-transferase (yfdE).